The following is a 61-amino-acid chain: Large ribosomal subunit protein bL32 (61 aa).

This sequence belongs to the bacterial ribosomal protein bL32 family.

The protein is Large ribosomal subunit protein bL32 of Syntrophus aciditrophicus (strain SB).